A 1262-amino-acid chain; its full sequence is Putative late blight resistance protein homolog R1B-23 (1262 aa).

Coiled coils occupy residues 364–384 and 475–496; these read DSLA…ESMQ and RMNE…KLLN. In terms of domain architecture, NB-ARC spans 475–761; it reads RMNEEIVGFE…ISESFIKSCE (287 aa). An ATP-binding site is contributed by 508–515; it reads GMPGLGKT. 6 LRR repeats span residues 890 to 914, 933 to 961, 1036 to 1059, 1064 to 1083, 1084 to 1112, and 1133 to 1157; these read FKFL…LFYL, LWNL…VWDM, PIRL…CISA, YLEL…TADH, LKHL…MFPQ, and FPNL…FMDI. An HMA domain is found at 1181 to 1248; it reads ETQVEDNQNT…KLRNVAYADE (68 aa).

Belongs to the disease resistance NB-LRR family.

Its subcellular location is the cytoplasm. It localises to the membrane. In terms of biological role, confers resistance to late blight (Phytophthora infestans) races carrying the avirulence gene Avr1. Resistance proteins guard the plant against pathogens that contain an appropriate avirulence protein via an indirect interaction with this avirulence protein. That triggers a defense system including the hypersensitive response, which restricts the pathogen growth. In Solanum demissum (Wild potato), this protein is Putative late blight resistance protein homolog R1B-23 (R1B-23).